A 141-amino-acid chain; its full sequence is Large ribosomal subunit protein uL11 (141 aa).

The protein belongs to the universal ribosomal protein uL11 family. In terms of assembly, part of the ribosomal stalk of the 50S ribosomal subunit. Interacts with L10 and the large rRNA to form the base of the stalk. L10 forms an elongated spine to which L12 dimers bind in a sequential fashion forming a multimeric L10(L12)X complex. One or more lysine residues are methylated.

Functionally, forms part of the ribosomal stalk which helps the ribosome interact with GTP-bound translation factors. The polypeptide is Large ribosomal subunit protein uL11 (Chlorobium phaeobacteroides (strain DSM 266 / SMG 266 / 2430)).